The chain runs to 185 residues: Elongation factor P (185 aa).

Belongs to the elongation factor P family.

The protein localises to the cytoplasm. It participates in protein biosynthesis; polypeptide chain elongation. Functionally, involved in peptide bond synthesis. Stimulates efficient translation and peptide-bond synthesis on native or reconstituted 70S ribosomes in vitro. Probably functions indirectly by altering the affinity of the ribosome for aminoacyl-tRNA, thus increasing their reactivity as acceptors for peptidyl transferase. This chain is Elongation factor P (efp), found in Synechococcus elongatus (strain ATCC 33912 / PCC 7942 / FACHB-805) (Anacystis nidulans R2).